Here is a 465-residue protein sequence, read N- to C-terminus: Respiratory transcription factor ZNF1 (465 aa).

Residues 8–34 constitute a DNA-binding region (zn(2)-C6 fungal-type); it reads CDCCCIRRVKCDRKKPCKCCLQHNLQC.

It belongs to the MAL13 family.

The protein resides in the nucleus. Its function is as follows. Transcription factor that regulates respiratory growth and plays a critical role in stress adaptation during non-fermentative growth. Binds to promoters of genes involved in non-fermentative metabolism, including processes such as gluconeogenesis (PCK1, FBP1 and MDH2), glyoxylate shunt (MLS1 and ICL1) and the tricarboxylic acid cycle (ACO1). Plays a role in maintaining mitochondrial morphology and function. Also plays a role in tolerance to pH and osmotic stress, especially during the oxidative metabolism. This Saccharomyces cerevisiae (strain ATCC 204508 / S288c) (Baker's yeast) protein is Respiratory transcription factor ZNF1.